A 399-amino-acid chain; its full sequence is Protein IQ-DOMAIN 25 (399 aa).

A Nuclear localization signal motif is present at residues 1-8 (MRKNLTKL). 2 calmodulin-binding regions span residues 81-91 (KERRTHAIAVA) and 99-110 (DAAVAAAKAAAA). 2 IQ domains span residues 130–158 (EHRA…GVVK) and 159–181 (IQAL…SMEA). 3 disordered regions span residues 198–219 (NGNA…ENRN), 262–302 (SPLS…SPAR), and 346–377 (LRSH…VRMQ). The segment covering 285 to 294 (KFPTAQSTPR) has biased composition (polar residues).

Belongs to the IQD family. Binds to multiple calmodulin (CaM) in the presence of Ca(2+) and CaM-like proteins.

The protein resides in the nucleus. It localises to the cell membrane. Functionally, may be involved in cooperative interactions with calmodulins or calmodulin-like proteins. Recruits calmodulin proteins to microtubules, thus being a potential scaffold in cellular signaling and trafficking. May associate with nucleic acids and regulate gene expression at the transcriptional or post-transcriptional level. The protein is Protein IQ-DOMAIN 25 of Arabidopsis thaliana (Mouse-ear cress).